Here is a 741-residue protein sequence, read N- to C-terminus: Phosphoribosylformylglycinamidine synthase subunit PurL (741 aa).

Residue His-53 is part of the active site. Residues Tyr-56 and Lys-95 each contribute to the ATP site. Glu-97 serves as a coordination point for Mg(2+). Substrate is bound by residues 98–101 (SHNH) and Arg-120. The active-site Proton acceptor is His-99. Asp-121 provides a ligand contact to Mg(2+). Position 244 (Gln-244) interacts with substrate. Asp-274 is a binding site for Mg(2+). 318-320 (ESQ) is a substrate binding site. ATP-binding residues include Asp-501 and Gly-538. Position 539 (Asn-539) interacts with Mg(2+). Ser-541 serves as a coordination point for substrate.

This sequence belongs to the FGAMS family. Monomer. Part of the FGAM synthase complex composed of 1 PurL, 1 PurQ and 2 PurS subunits.

It localises to the cytoplasm. The enzyme catalyses N(2)-formyl-N(1)-(5-phospho-beta-D-ribosyl)glycinamide + L-glutamine + ATP + H2O = 2-formamido-N(1)-(5-O-phospho-beta-D-ribosyl)acetamidine + L-glutamate + ADP + phosphate + H(+). It participates in purine metabolism; IMP biosynthesis via de novo pathway; 5-amino-1-(5-phospho-D-ribosyl)imidazole from N(2)-formyl-N(1)-(5-phospho-D-ribosyl)glycinamide: step 1/2. In terms of biological role, part of the phosphoribosylformylglycinamidine synthase complex involved in the purines biosynthetic pathway. Catalyzes the ATP-dependent conversion of formylglycinamide ribonucleotide (FGAR) and glutamine to yield formylglycinamidine ribonucleotide (FGAM) and glutamate. The FGAM synthase complex is composed of three subunits. PurQ produces an ammonia molecule by converting glutamine to glutamate. PurL transfers the ammonia molecule to FGAR to form FGAM in an ATP-dependent manner. PurS interacts with PurQ and PurL and is thought to assist in the transfer of the ammonia molecule from PurQ to PurL. In Latilactobacillus sakei subsp. sakei (strain 23K) (Lactobacillus sakei subsp. sakei), this protein is Phosphoribosylformylglycinamidine synthase subunit PurL.